The primary structure comprises 240 residues: Sialidase 85-1.2 (240 aa).

Acidic residues predominate over residues 127–142 (DDDDGGDDDDEEDSQE). Disordered regions lie at residues 127–158 (DDDD…GKKP) and 221–240 (HRGG…QRDA). A compositionally biased stretch (basic and acidic residues) spans 144–155 (SSPKESSPEKIG).

The protein belongs to the glycosyl hydrolase 33 family.

The catalysed reaction is Hydrolysis of alpha-(2-&gt;3)-, alpha-(2-&gt;6)-, alpha-(2-&gt;8)- glycosidic linkages of terminal sialic acid residues in oligosaccharides, glycoproteins, glycolipids, colominic acid and synthetic substrates.. Its function is as follows. Developmentally regulated neuraminidase implicated in parasite invasion of cells. May contribute to the pathology during T.cruzi infection by cleaving sialic acid from cells of the immune system. The sequence is that of Sialidase 85-1.2 (SA85-1.2) from Trypanosoma cruzi.